The primary structure comprises 460 residues: Proline--tRNA ligase (460 aa).

Belongs to the class-II aminoacyl-tRNA synthetase family. ProS type 3 subfamily. Homodimer.

It localises to the cytoplasm. The catalysed reaction is tRNA(Pro) + L-proline + ATP = L-prolyl-tRNA(Pro) + AMP + diphosphate. Catalyzes the attachment of proline to tRNA(Pro) in a two-step reaction: proline is first activated by ATP to form Pro-AMP and then transferred to the acceptor end of tRNA(Pro). The polypeptide is Proline--tRNA ligase (Methanococcus maripaludis (strain DSM 14266 / JCM 13030 / NBRC 101832 / S2 / LL)).